Reading from the N-terminus, the 169-residue chain is Peptide deformylase 1 (169 aa).

Positions 91 and 133 each coordinate Fe cation. Residue glutamate 134 is part of the active site. Residue histidine 137 participates in Fe cation binding.

It belongs to the polypeptide deformylase family. The cofactor is Fe(2+).

It carries out the reaction N-terminal N-formyl-L-methionyl-[peptide] + H2O = N-terminal L-methionyl-[peptide] + formate. Removes the formyl group from the N-terminal Met of newly synthesized proteins. Requires at least a dipeptide for an efficient rate of reaction. N-terminal L-methionine is a prerequisite for activity but the enzyme has broad specificity at other positions. The sequence is that of Peptide deformylase 1 from Vibrio cholerae serotype O1 (strain ATCC 39315 / El Tor Inaba N16961).